The sequence spans 320 residues: Reticulocalbin-2 (320 aa).

A signal peptide spans 1 to 25 (MRLGPRPAALGLLLPLLLYAAVAGA). EF-hand domains are found at residues 64–99 (EQQR…SFKH) and 100–135 (YAMQ…RVID). Ca(2+) is bound by residues Asp77, Asp79, Asp81, Glu88, Asp113, Asn115, Asp117, and Glu124. Thr140 carries the post-translational modification Phosphothreonine. 4 EF-hand domains span residues 150–185 (FRQL…HPEE), 189–224 (MTEF…DPTA), 230–265 (WILV…NNQG), and 266–301 (IAQE…FLTS). Ca(2+)-binding residues include Asp167, Glu176, Asp202, Asn204, Asp206, Glu213, Asp243, Asp245, Asp247, Arg249, Glu254, Asp279, Asn281, Asp283, Lys285, and Glu290. Residues 317–320 (HDEL) carry the Prevents secretion from ER motif.

The protein belongs to the CREC family.

The protein resides in the endoplasmic reticulum lumen. In terms of biological role, not known. Binds calcium. In Mus musculus (Mouse), this protein is Reticulocalbin-2 (Rcn2).